A 187-amino-acid polypeptide reads, in one-letter code: Peptidyl-tRNA hydrolase (187 aa).

Tyr-15 is a binding site for tRNA. His-20 (proton acceptor) is an active-site residue. 3 residues coordinate tRNA: Tyr-64, Asn-66, and Asn-112.

This sequence belongs to the PTH family. Monomer.

The protein localises to the cytoplasm. The catalysed reaction is an N-acyl-L-alpha-aminoacyl-tRNA + H2O = an N-acyl-L-amino acid + a tRNA + H(+). Hydrolyzes ribosome-free peptidyl-tRNAs (with 1 or more amino acids incorporated), which drop off the ribosome during protein synthesis, or as a result of ribosome stalling. In terms of biological role, catalyzes the release of premature peptidyl moieties from peptidyl-tRNA molecules trapped in stalled 50S ribosomal subunits, and thus maintains levels of free tRNAs and 50S ribosomes. This chain is Peptidyl-tRNA hydrolase, found in Phocaeicola vulgatus (strain ATCC 8482 / DSM 1447 / JCM 5826 / CCUG 4940 / NBRC 14291 / NCTC 11154) (Bacteroides vulgatus).